A 62-amino-acid polypeptide reads, in one-letter code: Potassium channel toxin kappa-KTx 3.3 (62 aa).

Residues 1 to 26 form the signal peptide; the sequence is MKSTLMTASLLILVLLSIVDYASVYA. A propeptide spanning residues 27–36 is cleaved from the precursor; it reads ELIDSEISME. Disulfide bonds link cysteine 43/cysteine 61 and cysteine 47/cysteine 57.

The protein belongs to the short scorpion toxin superfamily. Potassium channel inhibitor kappa-KTx family. Kappa-KTx 3 subfamily. Expressed by the venom gland.

It is found in the secreted. Potassium channel inhibitor (Kv). The polypeptide is Potassium channel toxin kappa-KTx 3.3 (Heterometrus petersii (Asian forest scorpion)).